A 205-amino-acid polypeptide reads, in one-letter code: Cell wall / vacuolar inhibitor of fructosidase 1 (205 aa).

The first 23 residues, 1–23 (MKMMKVMMLIVMMMMVMVMVSEG), serve as a signal peptide directing secretion. 2 disulfide bridges follow: cysteine 30/cysteine 39 and cysteine 93/cysteine 134. 2 N-linked (GlcNAc...) asparagine glycosylation sites follow: asparagine 139 and asparagine 156.

The protein belongs to the PMEI family. In terms of tissue distribution, mostly expressed in roots, senescent leaves and flowers (in sepals), and, to a lower extent, in stems, specifically in the vascular tissues (e.g. in the phloem).

The protein localises to the vacuole. Inhibits fructosidases from vacuoles (vacuolar invertase VI). The sequence is that of Cell wall / vacuolar inhibitor of fructosidase 1 (C/VIF1) from Arabidopsis thaliana (Mouse-ear cress).